The chain runs to 229 residues: Large ribosomal subunit protein uL1 (229 aa).

The protein belongs to the universal ribosomal protein uL1 family. As to quaternary structure, part of the 50S ribosomal subunit.

Functionally, binds directly to 23S rRNA. The L1 stalk is quite mobile in the ribosome, and is involved in E site tRNA release. In terms of biological role, protein L1 is also a translational repressor protein, it controls the translation of the L11 operon by binding to its mRNA. This is Large ribosomal subunit protein uL1 from Clostridium botulinum (strain ATCC 19397 / Type A).